The primary structure comprises 195 residues: Inhibitor of glycogen debranching 1 (195 aa).

Residues Met1–Glu18 show a composition bias toward polar residues. The tract at residues Met1–Phe101 is disordered. Ser64 is subject to Phosphoserine. Residue Thr65 is modified to Phosphothreonine. Over residues Glu75–Ser95 the composition is skewed to basic and acidic residues. 2 positions are modified to phosphoserine: Ser95 and Ser96. The residue at position 132 (Thr132) is a Phosphothreonine. Positions Asn146–Ser175 are disordered. Residues Tyr148–Ser157 are compositionally biased toward polar residues. Position 164 is a phosphoserine (Ser164).

Interacts with GDB1.

It is found in the cytoplasm. Functionally, acts as an inhibitor of GDB1, enhancing the ability of cells to store glucose as glycogen. This chain is Inhibitor of glycogen debranching 1 (IGD1), found in Saccharomyces cerevisiae (strain ATCC 204508 / S288c) (Baker's yeast).